Reading from the N-terminus, the 334-residue chain is Holliday junction branch migration complex subunit RuvB (334 aa).

The segment at 1-181 (MTRILDNDLM…FGITGHMEYY (181 aa)) is large ATPase domain (RuvB-L). Residues leucine 20, arginine 21, glycine 62, lysine 65, threonine 66, threonine 67, 128–130 (EDF), arginine 171, tyrosine 181, and arginine 218 each bind ATP. Threonine 66 provides a ligand contact to Mg(2+). The tract at residues 182 to 252 (QVDDLTEIVE…MTDKALEMLD (71 aa)) is small ATPAse domain (RuvB-S). Positions 255–334 (HEGLDYVDQK…LKYPLDTKTE (80 aa)) are head domain (RuvB-H). Arginine 291, arginine 310, arginine 312, and arginine 315 together coordinate DNA.

This sequence belongs to the RuvB family. In terms of assembly, homohexamer. Forms an RuvA(8)-RuvB(12)-Holliday junction (HJ) complex. HJ DNA is sandwiched between 2 RuvA tetramers; dsDNA enters through RuvA and exits via RuvB. An RuvB hexamer assembles on each DNA strand where it exits the tetramer. Each RuvB hexamer is contacted by two RuvA subunits (via domain III) on 2 adjacent RuvB subunits; this complex drives branch migration. In the full resolvosome a probable DNA-RuvA(4)-RuvB(12)-RuvC(2) complex forms which resolves the HJ.

Its subcellular location is the cytoplasm. The catalysed reaction is ATP + H2O = ADP + phosphate + H(+). Functionally, the RuvA-RuvB-RuvC complex processes Holliday junction (HJ) DNA during genetic recombination and DNA repair, while the RuvA-RuvB complex plays an important role in the rescue of blocked DNA replication forks via replication fork reversal (RFR). RuvA specifically binds to HJ cruciform DNA, conferring on it an open structure. The RuvB hexamer acts as an ATP-dependent pump, pulling dsDNA into and through the RuvAB complex. RuvB forms 2 homohexamers on either side of HJ DNA bound by 1 or 2 RuvA tetramers; 4 subunits per hexamer contact DNA at a time. Coordinated motions by a converter formed by DNA-disengaged RuvB subunits stimulates ATP hydrolysis and nucleotide exchange. Immobilization of the converter enables RuvB to convert the ATP-contained energy into a lever motion, pulling 2 nucleotides of DNA out of the RuvA tetramer per ATP hydrolyzed, thus driving DNA branch migration. The RuvB motors rotate together with the DNA substrate, which together with the progressing nucleotide cycle form the mechanistic basis for DNA recombination by continuous HJ branch migration. Branch migration allows RuvC to scan DNA until it finds its consensus sequence, where it cleaves and resolves cruciform DNA. This chain is Holliday junction branch migration complex subunit RuvB, found in Streptococcus uberis (strain ATCC BAA-854 / 0140J).